Consider the following 146-residue polypeptide: Hemoglobin subunit beta-1 (146 aa).

The Globin domain maps to 2–146; that stretch reads HWTAEEKSAI…VAHALAHRYH (145 aa). The heme b site is built by H63 and H92.

The protein belongs to the globin family. As to quaternary structure, heterotetramer of two alpha chains and two beta chains. In terms of tissue distribution, red blood cells.

Involved in oxygen transport from the lung to the various peripheral tissues. This is Hemoglobin subunit beta-1 from Drymarchon melanurus erebennus (Texas indigo snake).